Consider the following 651-residue polypeptide: Intraflagellar transport protein 70A (651 aa).

TPR repeat units lie at residues Asp-8–Ser-41, Arg-42–Val-75, Pro-140–Lys-173, Asp-175–Glu-207, Leu-372–Thr-405, Ile-410–His-443, and Ile-445–Asn-478. Positions Tyr-494 to Asn-521 form a coiled coil. Residues Cys-530 to Lys-563 form a TPR 8 repeat.

This sequence belongs to the TTC30/dfy-1/fleer family.

The protein localises to the cell projection. It is found in the cilium. In terms of biological role, required for polyglutamylation of axonemal tubulin. Plays a role in anterograde intraflagellar transport (IFT), the process by which cilia precursors are transported from the base of the cilium to the site of their incorporation at the tip. The sequence is that of Intraflagellar transport protein 70A (ift70a) from Xenopus tropicalis (Western clawed frog).